The primary structure comprises 632 residues: Mitoguardin 1 (632 aa).

The helical transmembrane segment at 70-90 threads the bilayer; it reads PVAKKLFVVTAVSAISVIFLA. Ser-289 and Ser-293 each carry phosphoserine.

This sequence belongs to the mitoguardin family. Homodimer and heterodimer; forms heterodimers with MIGA2. Interacts with PLD6/MitoPLD.

Its subcellular location is the mitochondrion outer membrane. Regulator of mitochondrial fusion: acts by forming homo- and heterodimers at the mitochondrial outer membrane and facilitating the formation of PLD6/MitoPLD dimers. May act by regulating phospholipid metabolism via PLD6/MitoPLD. This Homo sapiens (Human) protein is Mitoguardin 1.